The primary structure comprises 80 residues: Crustacean hyperglycemic hormones (80 aa).

Cystine bridges form between Cys13–Cys49, Cys29–Cys45, and Cys32–Cys58. Valine amide is present on Val78.

Belongs to the arthropod CHH/MIH/GIH/VIH hormone family. Produced by the medulla terminalis X-organ in the eyestalks and transported to the sinus gland where they are stored and released.

It localises to the secreted. Functionally, hormone found in the sinus gland of isopods and decapods which controls the blood sugar level. Has a secretagogue action over the amylase released from the midgut gland. May act as a stress hormone and may be involved in the control of molting and reproduction. This chain is Crustacean hyperglycemic hormones, found in Penaeus vannamei (Whiteleg shrimp).